The primary structure comprises 227 residues: uncharacterized protein (227 aa).

The region spanning 3 to 119 (RADFCIIGLG…STMGIREALI (117 aa)) is the RCK N-terminal domain. One can recognise an RCK C-terminal domain in the interval 134–221 (HGLENEIINL…LNKYLNYINP (88 aa)).

This is an uncharacterized protein from Mycoplasma genitalium (strain ATCC 33530 / DSM 19775 / NCTC 10195 / G37) (Mycoplasmoides genitalium).